The chain runs to 206 residues: dITP/XTP pyrophosphatase (206 aa).

7–12 is a binding site for substrate; sequence SCHGYK. Asp-70 (proton acceptor) is an active-site residue. Asp-70 lines the Mg(2+) pocket. Substrate is bound by residues Thr-71, 154 to 157, Lys-177, and 182 to 183; these read FGYD and HR.

The protein belongs to the HAM1 NTPase family. In terms of assembly, homodimer. It depends on Mg(2+) as a cofactor.

The enzyme catalyses XTP + H2O = XMP + diphosphate + H(+). It carries out the reaction dITP + H2O = dIMP + diphosphate + H(+). The catalysed reaction is ITP + H2O = IMP + diphosphate + H(+). Functionally, pyrophosphatase that catalyzes the hydrolysis of nucleoside triphosphates to their monophosphate derivatives, with a high preference for the non-canonical purine nucleotides XTP (xanthosine triphosphate), dITP (deoxyinosine triphosphate) and ITP. Seems to function as a house-cleaning enzyme that removes non-canonical purine nucleotides from the nucleotide pool, thus preventing their incorporation into DNA/RNA and avoiding chromosomal lesions. The sequence is that of dITP/XTP pyrophosphatase from Chlamydia caviae (strain ATCC VR-813 / DSM 19441 / 03DC25 / GPIC) (Chlamydophila caviae).